The following is a 36-amino-acid chain: Cytochrome b6-f complex subunit 7 (36 aa).

Residues Asn-9–Ile-29 traverse the membrane as a helical segment.

Belongs to the PetM family. The 4 large subunits of the cytochrome b6-f complex are cytochrome b6, subunit IV (17 kDa polypeptide, PetD), cytochrome f and the Rieske protein, while the 4 small subunits are PetG, PetL, PetM and PetN. The complex functions as a dimer.

It localises to the cellular thylakoid membrane. Functionally, component of the cytochrome b6-f complex, which mediates electron transfer between photosystem II (PSII) and photosystem I (PSI), cyclic electron flow around PSI, and state transitions. In Synechocystis sp. (strain ATCC 27184 / PCC 6803 / Kazusa), this protein is Cytochrome b6-f complex subunit 7.